The following is a 208-amino-acid chain: Small ribosomal subunit protein uS3 (208 aa).

The KH type-2 domain maps to 17–86 (IDEYLEKELR…NPQIEVEEIK (70 aa)).

This sequence belongs to the universal ribosomal protein uS3 family. In terms of assembly, part of the 30S ribosomal subunit.

Functionally, binds the lower part of the 30S subunit head. In Thermococcus onnurineus (strain NA1), this protein is Small ribosomal subunit protein uS3.